Reading from the N-terminus, the 317-residue chain is Pseudouridine-5'-phosphate glycosidase 1 (317 aa).

The active-site Proton donor is glutamate 40. Residues lysine 101 and valine 121 each coordinate substrate. Aspartate 153 provides a ligand contact to Mn(2+). 155-157 contributes to the substrate binding site; sequence SAD. The active-site Nucleophile is the lysine 174.

This sequence belongs to the pseudouridine-5'-phosphate glycosidase family. Homotrimer. Mn(2+) is required as a cofactor.

The enzyme catalyses D-ribose 5-phosphate + uracil = psi-UMP + H2O. Functionally, catalyzes the reversible cleavage of pseudouridine 5'-phosphate (PsiMP) to ribose 5-phosphate and uracil. Functions biologically in the cleavage direction, as part of a pseudouridine degradation pathway. This chain is Pseudouridine-5'-phosphate glycosidase 1, found in Rhizobium johnstonii (strain DSM 114642 / LMG 32736 / 3841) (Rhizobium leguminosarum bv. viciae).